We begin with the raw amino-acid sequence, 487 residues long: NADH-quinone oxidoreductase subunit N (487 aa).

The next 14 helical transmembrane spans lie at V12 to V32, L40 to F60, Y79 to S99, F104 to I124, M129 to I149, F164 to F184, I201 to I221, A248 to L268, I281 to T301, S310 to V330, G332 to L352, A378 to F398, G411 to L431, and L455 to S475.

It belongs to the complex I subunit 2 family. In terms of assembly, NDH-1 is composed of 14 different subunits. Subunits NuoA, H, J, K, L, M, N constitute the membrane sector of the complex.

It is found in the cell inner membrane. It carries out the reaction a quinone + NADH + 5 H(+)(in) = a quinol + NAD(+) + 4 H(+)(out). Its function is as follows. NDH-1 shuttles electrons from NADH, via FMN and iron-sulfur (Fe-S) centers, to quinones in the respiratory chain. The immediate electron acceptor for the enzyme in this species is believed to be ubiquinone. Couples the redox reaction to proton translocation (for every two electrons transferred, four hydrogen ions are translocated across the cytoplasmic membrane), and thus conserves the redox energy in a proton gradient. This Bartonella bacilliformis (strain ATCC 35685 / KC583 / Herrer 020/F12,63) protein is NADH-quinone oxidoreductase subunit N.